The chain runs to 205 residues: Recombination protein RecR (205 aa).

Residues 59–74 (CAMCNTFCEGGLCDIC) form a C4-type zinc finger. The 96-residue stretch at 82–177 (RRLMVVHMPA…KVSRLSQGIP (96 aa)) folds into the Toprim domain.

Belongs to the RecR family.

In terms of biological role, may play a role in DNA repair. It seems to be involved in an RecBC-independent recombinational process of DNA repair. It may act with RecF and RecO. The protein is Recombination protein RecR of Neisseria meningitidis serogroup C (strain 053442).